Consider the following 967-residue polypeptide: Phosphatidylserine decarboxylase proenzyme 3 (967 aa).

A disordered region spans residues 217-255; that stretch reads FIAEPDSSIPPSESSVSISTDTGKETPPSKSKKSSNQPY. The segment covering 220–237 has biased composition (low complexity); the sequence is EPDSSIPPSESSVSISTD. One can recognise a C2 domain in the interval 250–373; sequence SSNQPYVSIG…SSAQVDPETG (124 aa). 3 residues coordinate Ca(2+): Asp343, Ser346, and Asp349. The segment covering 532 to 544 has biased composition (low complexity); sequence DQQATQTPQSPSS. Residues 532–566 form a disordered region; the sequence is DQQATQTPQSPSSNEESGPGTPTQTSDQYEDSEDS. The segment covering 545–558 has biased composition (polar residues); the sequence is NEESGPGTPTQTSD. Active-site charge relay system; for autoendoproteolytic cleavage activity residues include Asp769, His825, and Ser912. The active-site Schiff-base intermediate with substrate; via pyruvic acid; for decarboxylase activity is Ser912. A Pyruvic acid (Ser); by autocatalysis modification is found at Ser912. Positions 947-967 are disordered; it reads IGQKIDPNKPTDAEDHSKSDS.

This sequence belongs to the phosphatidylserine decarboxylase family. PSD-B subfamily. Eukaryotic type II sub-subfamily. Heterodimer of a large membrane-associated beta subunit and a small pyruvoyl-containing alpha subunit. Pyruvate is required as a cofactor. The cofactor is Ca(2+). Post-translationally, is synthesized initially as an inactive proenzyme. Formation of the active enzyme involves a self-maturation process in which the active site pyruvoyl group is generated from an internal serine residue via an autocatalytic post-translational modification. Two non-identical subunits are generated from the proenzyme in this reaction, and the pyruvate is formed at the N-terminus of the alpha chain, which is derived from the carboxyl end of the proenzyme. The autoendoproteolytic cleavage occurs by a canonical serine protease mechanism, in which the side chain hydroxyl group of the serine supplies its oxygen atom to form the C-terminus of the beta chain, while the remainder of the serine residue undergoes an oxidative deamination to produce ammonia and the pyruvoyl prosthetic group on the alpha chain. During this reaction, the Ser that is part of the protease active site of the proenzyme becomes the pyruvoyl prosthetic group, which constitutes an essential element of the active site of the mature decarboxylase.

Its subcellular location is the golgi apparatus membrane. The protein localises to the endosome membrane. The protein resides in the cytoplasm. It catalyses the reaction a 1,2-diacyl-sn-glycero-3-phospho-L-serine + H(+) = a 1,2-diacyl-sn-glycero-3-phosphoethanolamine + CO2. It functions in the pathway phospholipid metabolism; phosphatidylethanolamine biosynthesis; phosphatidylethanolamine from CDP-diacylglycerol: step 2/2. Catalyzes the formation of phosphatidylethanolamine (PtdEtn) from phosphatidylserine (PtdSer). Plays a central role in phospholipid metabolism and in the interorganelle trafficking of phosphatidylserine. Together with psd1 and psd2, responsible for the majority of phosphatidylethanolamine synthesis. This is Phosphatidylserine decarboxylase proenzyme 3 from Schizosaccharomyces pombe (strain 972 / ATCC 24843) (Fission yeast).